The sequence spans 427 residues: Chaperone SurA (427 aa).

An N-terminal signal peptide occupies residues 1–19; sequence MKIWKSILFTTLLSCGAVA. PpiC domains lie at 170-268 and 277-377; these read TVQY…KIED and VTEV…EVLD.

It localises to the periplasm. The enzyme catalyses [protein]-peptidylproline (omega=180) = [protein]-peptidylproline (omega=0). Its function is as follows. Chaperone involved in the correct folding and assembly of outer membrane proteins. Recognizes specific patterns of aromatic residues and the orientation of their side chains, which are found more frequently in integral outer membrane proteins. May act in both early periplasmic and late outer membrane-associated steps of protein maturation. In Vibrio parahaemolyticus serotype O3:K6 (strain RIMD 2210633), this protein is Chaperone SurA.